Here is a 226-residue protein sequence, read N- to C-terminus: Fibrillarin-like rRNA/tRNA 2'-O-methyltransferase (226 aa).

Residues 82 to 83, 100 to 101, 125 to 126, and 145 to 148 each bind S-adenosyl-L-methionine; these read TT, EF, DA, and DVAQ.

This sequence belongs to the methyltransferase superfamily. Fibrillarin family. In terms of assembly, interacts with nop5. Component of box C/D small ribonucleoprotein (sRNP) particles that contain rpl7ae, FlpA and nop5, plus a guide RNA.

Involved in pre-rRNA and tRNA processing. Utilizes the methyl donor S-adenosyl-L-methionine to catalyze the site-specific 2'-hydroxyl methylation of ribose moieties in rRNA and tRNA. Site specificity is provided by a guide RNA that base pairs with the substrate. Methylation occurs at a characteristic distance from the sequence involved in base pairing with the guide RNA. The protein is Fibrillarin-like rRNA/tRNA 2'-O-methyltransferase of Methanosarcina barkeri (strain Fusaro / DSM 804).